The sequence spans 168 residues: CASP-like protein 1U1 (168 aa).

The Cytoplasmic portion of the chain corresponds to 1 to 6; the sequence is MDGAAR. The chain crosses the membrane as a helical span at residues 7–27; it reads AVSLFFRIAVVGLSVAAAVVM. Residues 28–49 lie on the Extracellular side of the membrane; sequence ATASQAFPFNYGGAVSYTKYPA. A helical membrane pass occupies residues 50-70; sequence FVYFVVAAVVSAVCSAAALYL. The Cytoplasmic portion of the chain corresponds to 71–80; the sequence is SVVREAAAGW. A helical membrane pass occupies residues 81–101; it reads AVALLDVVTMGLLFSAAGAVF. The Extracellular portion of the chain corresponds to 102–138; the sequence is AVRRMAPLYLGVAGADTVAGRWVNGEFCHAAGAFCWR. Residues 139–159 traverse the membrane as a helical segment; the sequence is VTTSAIICAFAAAAVSVAVLT. The Cytoplasmic portion of the chain corresponds to 160–168; sequence KGARHRGKH.

Belongs to the Casparian strip membrane proteins (CASP) family. As to quaternary structure, homodimer and heterodimers.

Its subcellular location is the cell membrane. This Oryza sativa subsp. japonica (Rice) protein is CASP-like protein 1U1.